The sequence spans 521 residues: Probable protein kinase UbiB (521 aa).

The region spanning 119 to 497 (SFDRQPVASA…QKRTNRLLQS (379 aa)) is the Protein kinase domain. ATP is bound by residues 125-133 (VASASIAQV) and Lys151. Asp286 (proton acceptor) is an active-site residue. Residues 496–516 (QSLIYGGLGFVLGLLVMQLFV) form a helical membrane-spanning segment.

It belongs to the ABC1 family. UbiB subfamily.

The protein resides in the cell inner membrane. Its pathway is cofactor biosynthesis; ubiquinone biosynthesis [regulation]. In terms of biological role, is probably a protein kinase regulator of UbiI activity which is involved in aerobic coenzyme Q (ubiquinone) biosynthesis. This Acidovorax sp. (strain JS42) protein is Probable protein kinase UbiB.